We begin with the raw amino-acid sequence, 313 residues long: Ankyrin repeat family A protein 2 (313 aa).

5 ANK repeats span residues 148 to 180 (ANSL…HTDE), 181 to 213 (EGFT…LLGK), 214 to 246 (GRES…EYDW), 247 to 279 (NGGT…IETD), and 280 to 313 (SGYN…NIKE).

Interacts (via ANK repeats) with CCDC8 (via PxLPxI/L motif); mediates the interaction with the 3M complex which is composed of CCDC8, CUL7 and OBSL1. Interacts (via ANK repeats) with HDAC4 (via PxLPxI/L motif). Interacts (via ANK repeats) with HDAC5 (via PxLPxI/L motif). Interacts (via ANK repeats) with LRP2/megalin (via PxLPxI/L motif). Interacts (via ANK repeats) with RFX7 (via PxLPxI/L motif). Interacts with AHRR. Interacts with NEK6.

It localises to the cytoplasm. It is found in the cytoskeleton. The protein localises to the membrane. Functionally, may regulate the interaction between the 3M complex and the histone deacetylases HDAC4 and HDAC5. May also regulate LRP2/megalin. In Homo sapiens (Human), this protein is Ankyrin repeat family A protein 2 (ANKRA2).